Here is a 146-residue protein sequence, read N- to C-terminus: Anti-sigma F factor (146 aa).

The protein belongs to the anti-sigma-factor family.

It catalyses the reaction L-seryl-[protein] + ATP = O-phospho-L-seryl-[protein] + ADP + H(+). It carries out the reaction L-threonyl-[protein] + ATP = O-phospho-L-threonyl-[protein] + ADP + H(+). Its function is as follows. Binds to sigma F and blocks its ability to form an RNA polymerase holoenzyme (E-sigma F). Phosphorylates SpoIIAA on a serine residue. This phosphorylation may enable SpoIIAA to act as an anti-anti-sigma factor that counteracts SpoIIAB and thus releases sigma F from inhibition. The protein is Anti-sigma F factor of Oceanobacillus iheyensis (strain DSM 14371 / CIP 107618 / JCM 11309 / KCTC 3954 / HTE831).